The primary structure comprises 209 residues: Pyroglutamyl-peptidase 1 (209 aa).

Residues Glu-85, Cys-149, and His-168 contribute to the active site.

Belongs to the peptidase C15 family. In terms of assembly, monomer.

It is found in the cytoplasm. The enzyme catalyses Release of an N-terminal pyroglutamyl group from a polypeptide, the second amino acid generally not being Pro.. In terms of biological role, removes 5-oxoproline from various penultimate amino acid residues except L-proline. This is Pyroglutamyl-peptidase 1 (Pgpep1) from Mus musculus (Mouse).